A 2224-amino-acid polypeptide reads, in one-letter code: Myomegalin (2224 aa).

Coiled coils occupy residues 41 to 97 (REDV…RQQE), 162 to 205 (DQYS…LLEE), 236 to 318 (VSES…REML), and 350 to 682 (CSQL…ALRQ). The disordered stretch occupies residues 206 to 236 (PASMEVQPVPKGLPTQQKPDLHETPTTQPPV). The segment covering 219 to 236 (PTQQKPDLHETPTTQPPV) has biased composition (polar residues). Residues 703 to 751 (GVTSIGPHHGEQTDQGSMQMPSRDDSTSLTAREEASIPRSTLGDSDTVA) are disordered. Phosphothreonine is present on T705. The span at 724 to 738 (SRDDSTSLTAREEAS) shows a compositional bias: basic and acidic residues. Coiled-coil stretches lie at residues 745-822 (GDSD…QLVD), 856-886 (NKRQ…RQLY), and 949-986 (AQEM…AGFS). Disordered stretches follow at residues 1098 to 1128 (TGLP…SLPL), 1141 to 1161 (NKSQ…GSTK), and 1270 to 1298 (VSPP…DDSS). A compositionally biased stretch (polar residues) spans 1112–1124 (ENTTTARPGSRPQ). Coiled coils occupy residues 1159–1187 (STKH…SEAT), 1295–1331 (DDSS…LSAT), and 1377–1401 (GLQA…LPKT). Residues 1276 to 1298 (KPLENKPGKQEEFRAHGTPDDSS) are compositionally biased toward basic and acidic residues. The 92-residue stretch at 1497–1588 (KDHKSEKEEA…DEKKPSPSHS (92 aa)) folds into the Olduvai domain. Disordered regions lie at residues 1576 to 1637 (THYD…SLSQ), 1736 to 1757 (SSGQ…LSSG), 1805 to 1824 (LSST…QGLE), and 1962 to 2001 (KASL…LNSP). Residues 1599 to 1609 (ESSSSPISLPT) are compositionally biased toward polar residues. Low complexity predominate over residues 1748-1757 (GSVSGELSSG). Positions 1769 to 1958 (GADLLEEHLG…RLQLEQQMDR (190 aa)) form a coiled coil. A coiled-coil region spans residues 2148 to 2191 (KEGQLMEKELLDLRAQVSQQEQILQNTAARLKRANQRKKSMEQF).

As to quaternary structure, interacts with PDE4D. Isoform 2 interacts with MAPRE1 and MAPRE3. Isoform 2 forms a pericentrosomal complex with AKAP9, CDK5RAP2 and EB1/MAPRE1; within this complex, may mediate MAPRE1-binding to CDK5RAP2. Interaction with AKAP9 stabilizes both proteins. Isoform 2 interacts (via N-terminus) with CAMSAP2; this interaction is much stronger in the presence of AKAP9. In complex with AKAP9, Isoform 2 recruits CAMSAP2 to the Golgi apparatus. Isoform 2 interacts with unglycosylated LGALS3BP; this interaction may connect the pericentrosomal complex to the gamma-tubulin ring complex (gamma-TuRC) to promote microtubule assembly and acetylation.

The protein localises to the cytoplasm. It localises to the cytoskeleton. Its subcellular location is the microtubule organizing center. It is found in the centrosome. The protein resides in the golgi apparatus. Functions as an anchor sequestering components of the cAMP-dependent pathway to Golgi and/or centrosomes. In terms of biological role, participates in microtubule dynamics, promoting microtubule assembly. Depending upon the cell context, may act at the level of the Golgi apparatus or that of the centrosome. In complex with AKAP9, recruits CAMSAP2 to the Golgi apparatus and tethers non-centrosomal minus-end microtubules to the Golgi, an important step for polarized cell movement. In complex with AKAP9, EB1/MAPRE1 and CDK5RAP2, contributes to microtubules nucleation and extension from the centrosome to the cell periphery, a crucial process for directed cell migration, mitotic spindle orientation and cell-cycle progression. This Mus musculus (Mouse) protein is Myomegalin (Pde4dip).